The sequence spans 184 residues: 3-hydroxyanthranilate 3,4-dioxygenase (184 aa).

R44 serves as a coordination point for O2. Positions 48, 54, and 92 each coordinate Fe cation. E54 is a binding site for substrate. 2 residues coordinate substrate: R96 and E106. 4 residues coordinate a divalent metal cation: C121, C126, C162, and C165.

Belongs to the 3-HAO family. It depends on Fe(2+) as a cofactor.

The protein resides in the cytoplasm. The catalysed reaction is 3-hydroxyanthranilate + O2 = (2Z,4Z)-2-amino-3-carboxymuconate 6-semialdehyde. It functions in the pathway cofactor biosynthesis; NAD(+) biosynthesis; quinolinate from L-kynurenine: step 3/3. Catalyzes the oxidative ring opening of 3-hydroxyanthranilate to 2-amino-3-carboxymuconate semialdehyde, which spontaneously cyclizes to quinolinate. In Pyricularia oryzae (strain 70-15 / ATCC MYA-4617 / FGSC 8958) (Rice blast fungus), this protein is 3-hydroxyanthranilate 3,4-dioxygenase.